The sequence spans 342 residues: Tryptophan--tRNA ligase (342 aa).

Residues 19–21 and 27–28 each bind ATP; these read QPS and GN. Residues 20–28 carry the 'HIGH' region motif; sequence PSGELTIGN. L-tryptophan is bound at residue Asp-143. Residues 155–157, Val-194, and 203–207 contribute to the ATP site; these read GED and KMSKS. Positions 203–207 match the 'KMSKS' region motif; it reads KMSKS.

The protein belongs to the class-I aminoacyl-tRNA synthetase family. In terms of assembly, homodimer.

The protein resides in the cytoplasm. The catalysed reaction is tRNA(Trp) + L-tryptophan + ATP = L-tryptophyl-tRNA(Trp) + AMP + diphosphate + H(+). Catalyzes the attachment of tryptophan to tRNA(Trp). The chain is Tryptophan--tRNA ligase from Yersinia pestis.